We begin with the raw amino-acid sequence, 567 residues long: Proton-coupled zinc antiporter SLC30A9, mitochondrial (567 aa).

A run of 5 helical transmembrane segments spans residues 238-258, 313-333, 341-361, 391-411, and 423-443; these read VVMVAICINGLNCFFKFLAWI, GVGIFMMGAGLSWYHGIMGLL, LLWAYCILAGSLVSEGATLLV, VILLEDTAAVLGVIIAATCMG, and SLGSLGVGTLLGVVSAFLIYT. The short motif at 461 to 465 is the LXXLL motif element; the sequence is LTELL.

Belongs to the cation diffusion facilitator (CDF) transporter (TC 2.A.4) family. SLC30A subfamily. Interacts with GRIP1, ESR1, AR and CTNNB1.

It localises to the mitochondrion membrane. The protein resides in the nucleus. It is found in the endoplasmic reticulum. It catalyses the reaction Zn(2+)(in) + 2 H(+)(out) = Zn(2+)(out) + 2 H(+)(in). Acts as a zinc transporter involved in intracellular zinc homeostasis. Functions as a secondary coactivator for nuclear receptors by cooperating with p160 coactivators subtypes. Plays a role in transcriptional activation of Wnt-responsive genes. In terms of biological role, mitochondrial proton-coupled zinc ion antiporter mediating the export of zinc from the mitochondria and involved in zinc homeostasis, zinc mobilization as well as mitochondrial morphology and health. In nucleus, functions as a secondary coactivator for nuclear receptors by cooperating with p160 coactivators subtypes. Plays a role in transcriptional activation of Wnt-responsive genes. In Mus musculus (Mouse), this protein is Proton-coupled zinc antiporter SLC30A9, mitochondrial (Slc30a9).